The primary structure comprises 416 residues: Putative competence-damage inducible protein (416 aa).

Belongs to the CinA family.

The chain is Putative competence-damage inducible protein from Bacillus pumilus (strain SAFR-032).